We begin with the raw amino-acid sequence, 321 residues long: Probable UDP-sugar transporter protein SLC35A4 (321 aa).

Residues 1–22 (MYSVNIEPDGSNHSPSRKRLKQ) lie on the Cytoplasmic side of the membrane. A helical transmembrane segment spans residues 23–43 (ILWGLMLVLSVTIYGSHAPLI). The Lumenal portion of the chain corresponds to 44 to 56 (YLCKVNGEIPFSS). Residues 57 to 77 (SAVVLLIELSKFVISLVFFLI) form a helical membrane-spanning segment. The Cytoplasmic segment spans residues 78-91 (QDWKSLKASVSWHL). Residues 92–112 (AAPYAVPAVLYGANNNLVVYI) traverse the membrane as a helical segment. At 113 to 119 (QHFMDPS) the chain is on the lumenal side. The helical transmembrane segment at 120–140 (SFQVLSNLKIVSTAVLYSLFL) threads the bilayer. The Cytoplasmic portion of the chain corresponds to 141–149 (RQRLSVRRW). A helical membrane pass occupies residues 150–170 (LSVFLLLAAGVFYSYGGIQDL). Residues 171–180 (EKVSSDTNLY) are Lumenal-facing. Residues 181–201 (VTLPGLLLMLAYCLISGLSAV) form a helical membrane-spanning segment. Residues 202–211 (YTEMTLKTQK) lie on the Cytoplasmic side of the membrane. A helical transmembrane segment spans residues 212-232 (IPLNMQNLYLYSFGIIINLTA). At 233-247 (HLTSSKNSDFFDGFS) the chain is on the lumenal side. Residues 248 to 268 (VWVWVIILSQALNGLIMSLVM) form a helical membrane-spanning segment. The Cytoplasmic segment spans residues 269 to 321 (KLSNNITRLFIISFSMLANGFLSFILFQLQLTALFFLAVVLIGLAVYMYYGMK).

This sequence belongs to the nucleotide-sugar transporter family. SLC35A subfamily.

It localises to the golgi apparatus membrane. The enzyme catalyses CDP-L-ribitol(in) + CDP(out) = CDP-L-ribitol(out) + CDP(in). In terms of biological role, mediates the transport of CDP-ribitol. Does not exhibit CMP-sialic acid, UDP-galactose and UDP-N-acetylglucosamine transport activity. The protein is Probable UDP-sugar transporter protein SLC35A4 of Xenopus tropicalis (Western clawed frog).